A 221-amino-acid chain; its full sequence is Cysteine protease inhibitor 8 (221 aa).

A signal peptide spans 1 to 26; it reads IPSINILSFLLLSSTLSLVAFARSFT. Positions 27-42 are excised as a propeptide; sequence SENPIVLPTTCHDDDN. A Vacuolar targeting signal motif is present at residues 29 to 34; sequence NPIVLP. Disulfide bonds link cysteine 84–cysteine 136 and cysteine 184–cysteine 190.

Belongs to the protease inhibitor I3 (leguminous Kunitz-type inhibitor) family.

The protein localises to the vacuole. Inhibitor of cysteine proteases. May protect the plant by inhibiting proteases of invading organisms. In Solanum tuberosum (Potato), this protein is Cysteine protease inhibitor 8.